Reading from the N-terminus, the 187-residue chain is ECF RNA polymerase sigma factor SigK (187 aa).

A sigma-70 factor domain-2 region spans residues Tyr30–Gln96. An Interaction with polymerase core subunit RpoC motif is present at residues Glu53 to Gln56. Residues Cys133 to Asn182 are sigma-70 factor domain-4. The H-T-H motif DNA-binding region spans Tyr155–Arg174.

This sequence belongs to the sigma-70 factor family. ECF subfamily. Interacts transiently with the RNA polymerase catalytic core formed by RpoA, RpoB, RpoC and RpoZ (2 alpha, 1 beta, 1 beta' and 1 omega subunit) to form the RNA polymerase holoenzyme that can initiate transcription. Interacts (via sigma-70 factor domain 4) with anti-sigma-K factor RskA.

Sigma factors are initiation factors that promote the attachment of RNA polymerase to specific initiation sites and are then released. Extracytoplasmic function (ECF) sigma factors are held in an inactive form by an anti-sigma factor until released by regulated intramembrane proteolysis. The polypeptide is ECF RNA polymerase sigma factor SigK (sigK) (Mycobacterium tuberculosis (strain ATCC 25177 / H37Ra)).